Consider the following 260-residue polypeptide: UPF0246 protein BPSL1241 (260 aa).

The protein belongs to the UPF0246 family.

The sequence is that of UPF0246 protein BPSL1241 from Burkholderia pseudomallei (strain K96243).